The following is a 320-amino-acid chain: Ferrochelatase (320 aa).

Fe cation contacts are provided by H194 and E275.

This sequence belongs to the ferrochelatase family. In terms of assembly, monomer.

Its subcellular location is the cytoplasm. It catalyses the reaction heme b + 2 H(+) = protoporphyrin IX + Fe(2+). Its pathway is porphyrin-containing compound metabolism; protoheme biosynthesis; protoheme from protoporphyrin-IX: step 1/1. Functionally, catalyzes the ferrous insertion into protoporphyrin IX. This is Ferrochelatase from Shigella flexneri serotype 5b (strain 8401).